The sequence spans 555 residues: Dihydroxy-acid dehydratase (555 aa).

Residue D80 participates in Mg(2+) binding. C121 is a binding site for [2Fe-2S] cluster. 2 residues coordinate Mg(2+): D122 and K123. Residue K123 is modified to N6-carboxylysine. [2Fe-2S] cluster is bound at residue C193. Residue E444 coordinates Mg(2+). The active-site Proton acceptor is S470.

It belongs to the IlvD/Edd family. As to quaternary structure, homodimer. The cofactor is [2Fe-2S] cluster. Mg(2+) serves as cofactor.

It carries out the reaction (2R)-2,3-dihydroxy-3-methylbutanoate = 3-methyl-2-oxobutanoate + H2O. It catalyses the reaction (2R,3R)-2,3-dihydroxy-3-methylpentanoate = (S)-3-methyl-2-oxopentanoate + H2O. Its pathway is amino-acid biosynthesis; L-isoleucine biosynthesis; L-isoleucine from 2-oxobutanoate: step 3/4. It functions in the pathway amino-acid biosynthesis; L-valine biosynthesis; L-valine from pyruvate: step 3/4. In terms of biological role, functions in the biosynthesis of branched-chain amino acids. Catalyzes the dehydration of (2R,3R)-2,3-dihydroxy-3-methylpentanoate (2,3-dihydroxy-3-methylvalerate) into 2-oxo-3-methylpentanoate (2-oxo-3-methylvalerate) and of (2R)-2,3-dihydroxy-3-methylbutanoate (2,3-dihydroxyisovalerate) into 2-oxo-3-methylbutanoate (2-oxoisovalerate), the penultimate precursor to L-isoleucine and L-valine, respectively. This is Dihydroxy-acid dehydratase from Aquifex aeolicus (strain VF5).